The chain runs to 393 residues: NAD(P)H-quinone oxidoreductase subunit H, chloroplastic (393 aa).

It belongs to the complex I 49 kDa subunit family. NDH is composed of at least 16 different subunits, 5 of which are encoded in the nucleus.

The protein localises to the plastid. Its subcellular location is the chloroplast thylakoid membrane. The enzyme catalyses a plastoquinone + NADH + (n+1) H(+)(in) = a plastoquinol + NAD(+) + n H(+)(out). It catalyses the reaction a plastoquinone + NADPH + (n+1) H(+)(in) = a plastoquinol + NADP(+) + n H(+)(out). Functionally, NDH shuttles electrons from NAD(P)H:plastoquinone, via FMN and iron-sulfur (Fe-S) centers, to quinones in the photosynthetic chain and possibly in a chloroplast respiratory chain. The immediate electron acceptor for the enzyme in this species is believed to be plastoquinone. Couples the redox reaction to proton translocation, and thus conserves the redox energy in a proton gradient. The sequence is that of NAD(P)H-quinone oxidoreductase subunit H, chloroplastic from Cryptomeria japonica (Japanese cedar).